The chain runs to 92 residues: Kappa-scoloptoxin(15)-Ssd2a (92 aa).

A signal peptide spans 1–20; it reads MKMVYLGLFLIITSCVISSG.

Contains 3 disulfide bonds. In terms of tissue distribution, expressed by the venom gland.

It is found in the secreted. In terms of biological role, inhibits voltage-gated potassium channels (Kv) (IC(50)=about 10 nM), when tested on DRG neurons. In Scolopendra dehaani (Thai centipede), this protein is Kappa-scoloptoxin(15)-Ssd2a.